The primary structure comprises 322 residues: Cytochrome c biogenesis protein CcsA (322 aa).

7 helical membrane passes run Ile-9 to Leu-29, Gly-43 to Gly-63, Leu-70 to Ile-90, Met-142 to Ile-162, Val-226 to Asn-246, Glu-259 to His-274, and Ala-287 to Leu-307.

This sequence belongs to the CcmF/CycK/Ccl1/NrfE/CcsA family. As to quaternary structure, may interact with Ccs1.

Its subcellular location is the plastid. The protein resides in the chloroplast thylakoid membrane. Its function is as follows. Required during biogenesis of c-type cytochromes (cytochrome c6 and cytochrome f) at the step of heme attachment. The polypeptide is Cytochrome c biogenesis protein CcsA (Chloranthus spicatus (Chulantree)).